A 397-amino-acid polypeptide reads, in one-letter code: Meiotic driver wtf28 (397 aa).

Disordered regions lie at residues 1–41 (MKNK…GNTL) and 65–102 (NWNK…SGTA). Positions 11–29 (SMDELSTKNDNEIDLEKGP) are enriched in basic and acidic residues. The next 9 helical transmembrane spans lie at 108–128 (FLIK…PAVC), 145–165 (WVYF…LWCF), 175–195 (VTVI…AQCV), 205–225 (CIKV…VGLY), 230–250 (DLVV…FGCV), 266–286 (SSIS…IWTL), 290–310 (LFGL…TKGL), 320–340 (ATGY…LFFY), and 357–377 (NGIA…ANAI).

This sequence belongs to the WTF family. As to quaternary structure, homomer. Forms protein aggregates. The two isoforms can interact with each other and with themselves. High sequence similarity is required for their interaction.

It localises to the spore membrane. The protein resides in the vacuole membrane. Its subcellular location is the ascus epiplasm. The protein localises to the cytoplasm. It is found in the endoplasmic reticulum membrane. In terms of biological role, promotes unequal transmission of alleles from the parental zygote to progeny spores by acting as poison/antidote system where the poison and antidote proteins are produced from the same locus; the poison component is trans-acting and targets all spores within an ascus whereas the antidote component is spore-specific, leading to poisoning of all progeny that do not inherit the allele. Its function is as follows. Localizes isoform 2 to the vacuole thereby facilitating its degradation. Functionally, forms toxic aggregates that disrupt spore maturation. The chain is Meiotic driver wtf28 from Schizosaccharomyces kambucha (Fission yeast).